The sequence spans 521 residues: Histone deacetylase HDAC1 (521 aa).

A histone deacetylase region spans residues 7–319 (KRVCYYYDSD…WTYETSVALA (313 aa)). The active site involves histidine 139. The tract at residues 376–521 (GVQIQAIPED…GAKGAKENNI (146 aa)) is disordered. Acidic residues predominate over residues 386 to 395 (AINDESDDED). Residue serine 391 is modified to Phosphoserine. The segment covering 396 to 414 (KVDKDDRLPQSDKDKRIVP) has biased composition (basic and acidic residues). Phosphoserine is present on residues serine 419, serine 421, and serine 455. The residue at position 457 (threonine 457) is a Phosphothreonine. The segment covering 459-470 (SEIKDEKEKGDG) has biased composition (basic and acidic residues). Residues 476–502 (STASNTNSNNNSNNKSDNDAGATANAG) are compositionally biased toward low complexity. Residues 503 to 513 (SGSGSGSGAGA) show a composition bias toward gly residues.

The protein belongs to the histone deacetylase family. HD type 1 subfamily. In terms of assembly, component of a form of the Esc/E(z) complex present specifically during early embryogenesis which is composed of Caf1-55, esc, E(z), Su(z)12, Pcl and HDAC1. The Esc/E(z) complex may also associate with Pcl and HDAC1 during early embryogenesis. This complex is distinct from the PRC1 complex, which contains many other PcG proteins like Pc, Ph, Psc, Su(z)2. The 2 complexes however cooperate and interact together during the first 3 hours of development to establish PcG silencing. Interacts with the histone methyltransferase Su(var)3-9. Component of a complex that contains at least HDAC1, CoRest and Su(var)3-3/Hdm. Component of the DREAM complex at least composed of Myb, Caf1-55, mip40, mip120, mip130, E2f2, Dp, Rbf, Rbf2, lin-52, HDAC1 and l(3)mbt. Interacts with the chromatin-remodeler Mi-2. Interacts with Rrp6.

The protein resides in the nucleus. The enzyme catalyses N(6)-acetyl-L-lysyl-[histone] + H2O = L-lysyl-[histone] + acetate. Functionally, catalyzes the deacetylation of lysine residues on the N-terminal part of the core histones (H2A, H2B, H3 and H4). Histone deacetylation may constitute a tag for epigenetic repression and plays an important role in transcriptional regulation, cell cycle progression and developmental events. For instance, deacetylation of histone H3 may be a prerequisite for the subsequent recruitment of the histone methyltransferase Su(var)3-9 to histones. Involved in position-effect variegation (PEV). In the larval brain, part of a regulatory network including the transcriptional repressors klu, dpn and E(spl)mgamma-HLH which is required for type II neuroblast self-renewal and for maintaining erm in an inactive state in intermediate neural progenitors (INP). This chain is Histone deacetylase HDAC1, found in Drosophila melanogaster (Fruit fly).